An 877-amino-acid chain; its full sequence is MNEKYAALKSNVSMLGHLLGNTIQEAHGDEILEKVETIRKLSKSARAGNQADRNNLIEEIKSLPDEQLTPVARAFNQFLNLTNIAEQYHTISRHCDAHVCEPDAINTLFAKLGQNGINKLDTAQAIRELNIELVLTAHPTEITRRTMINKLVKINECLSKLELSDLSYKERHKTEKRLEQLIAQSWHSDVIRKQRPTPLDEAKWGFAVVENSLWEAVPDFLRELDEKLKDYLDQGLPIDARPVHFSSWMGGDRDGNPFVTHTVTREVLLLSRWKAADLYLKDINELISELSMTKCNDTVRQLAGEDEHEPYRAILKQLRTLLSDTKEILDAKINGQKLAVKAPLQSVEQLWDPLFACYQSLRECGMSMIAEGSLLDTLRRVKAFGVHLVRLDIRQESTRHADVLSELTRYLGIGDYNHWSEQDKIAFLTNELASKRPLLPRDWQPSEPVKEVLDTCKIIAAQSREAFGAYVISMAKTASDVLAVHLLLQESGCPYRMDVCPLFETLDDLNNAEAVIKQLMSIDLYRGFIQNHQMVMIGYSDSAKDAGVMAAGWAQYHAMEALVNVAEQEGIELTLFHGRGGTIGRGGAPAHAALLSQPPKSLKGGLRVTEQGEMIRFKLGLPDVAVNSFNMYASAILEANLLPPPEPKQEWRDLMEVLSQVSCEAYRSVVRGEPDFVPYFRQATPELELGKLPLGSRPAKRNPNGGVESLRAIPWIFSWSQNRLLLPAWLGAGEAIQYSIDKGHQALLEEMCREWPFFSTRLGMLEMVYLKCNSEISRYYDERLADKSLLPLGDRLRDQLQSDIKAVLNVENNENLMQSDPWGQESIRLRNIYIEPLNMLQAELLYRTRQAGVVSEELEEALMVTIAGIAAGMRNTG.

Catalysis depends on residues His138 and Lys544.

Belongs to the PEPCase type 1 family. Mg(2+) serves as cofactor.

The catalysed reaction is oxaloacetate + phosphate = phosphoenolpyruvate + hydrogencarbonate. Its function is as follows. Forms oxaloacetate, a four-carbon dicarboxylic acid source for the tricarboxylic acid cycle. This is Phosphoenolpyruvate carboxylase from Vibrio vulnificus (strain YJ016).